We begin with the raw amino-acid sequence, 145 residues long: SsrA-binding protein (145 aa).

Belongs to the SmpB family.

It localises to the cytoplasm. Required for rescue of stalled ribosomes mediated by trans-translation. Binds to transfer-messenger RNA (tmRNA), required for stable association of tmRNA with ribosomes. tmRNA and SmpB together mimic tRNA shape, replacing the anticodon stem-loop with SmpB. tmRNA is encoded by the ssrA gene; the 2 termini fold to resemble tRNA(Ala) and it encodes a 'tag peptide', a short internal open reading frame. During trans-translation Ala-aminoacylated tmRNA acts like a tRNA, entering the A-site of stalled ribosomes, displacing the stalled mRNA. The ribosome then switches to translate the ORF on the tmRNA; the nascent peptide is terminated with the 'tag peptide' encoded by the tmRNA and targeted for degradation. The ribosome is freed to recommence translation, which seems to be the essential function of trans-translation. In Mycoplasmopsis pulmonis (strain UAB CTIP) (Mycoplasma pulmonis), this protein is SsrA-binding protein.